Here is a 634-residue protein sequence, read N- to C-terminus: Knob-associated histidine-rich protein (634 aa).

A signal peptide spans 1 to 34; the sequence is MKSFKNKNTLRRKKAFPVFTKILLVSFLVWVLKC. N-linked (GlcNAc...) asparagine glycosylation occurs at N42. The span at 57-87 shows a compositional bias: basic residues; it reads AQKQHEHHHHHHHQHQHQHQAPHQAHHHHHH. Disordered regions lie at residues 57 to 143 and 347 to 634; these read AQKQ…QVFR and SSVN…GCCG. Residues 95–104 show a composition bias toward low complexity; the sequence is PQVHQQVHGQ. Positions 108–117 are enriched in basic residues; sequence HHHHHHHHHQ. 2 stretches are compositionally biased toward basic and acidic residues: residues 354 to 375 and 396 to 405; these read KHGD…EGEK and KDNEDAESVK. Residues 406 to 422 are compositionally biased toward basic residues; it reads SKKHKSHDCEKKKSKKH. Composition is skewed to basic and acidic residues over residues 423–444 and 453–493; these read KDNE…GEKH and KTNE…KKVD. The segment covering 494–505 has biased composition (polar residues); that stretch reads STSADNKSTNAA. The span at 509–520 shows a compositional bias: basic and acidic residues; the sequence is AKDKTQGGKTDK. 4 tandem repeats follow at residues 540–549, 550–559, 560–569, and 570–579. The interval 540 to 580 is 4 X 10 AA tandem repeats of [TS]-[KE]-[GE]-A-T-K-[EG]-A-S-T; it reads TKGATKEASTSKEATKEASTSKGATKEASTTEGATKGASTT. Residues 567-591 show a composition bias toward low complexity; it reads ASTTEGATKGASTTAGSTTGATTGA. Polar residues predominate over residues 605–620; it reads AANNGEQVMSRGQAQL. Residues 625 to 634 show a composition bias toward basic residues; sequence KKKKKRGCCG.

It is found in the secreted. In terms of biological role, KAHRP might mimick human histidine-rich glycoproteins to anchor host thrombospondin or a parasite analog in a binding complex with the endothelial cell receptor. The protein is Knob-associated histidine-rich protein of Plasmodium falciparum (isolate FCR-3 / Gambia).